The primary structure comprises 271 residues: Fatty acid elongase 2 (271 aa).

A helical membrane pass occupies residues 16–36; that stretch reads WMIDNVDVAGFLCLLYLGLVW. A glycan (N-linked (GlcNAc...) asparagine) is linked at asparagine 52. The next 2 helical transmembrane spans lie at 59–79 and 110–130; these read VFIM…IVVV and FWVG…VLLV. A HxxHH motif motif is present at residues 140 to 144; that stretch reads HWYHH. The active-site Nucleophile is the histidine 143. Helical transmembrane passes span 162–182, 194–214, and 241–261; these read IFVF…YFAM, IAPV…AVTM, and GVVM…ESYL.

The protein belongs to the ELO family.

It localises to the endoplasmic reticulum membrane. It catalyses the reaction an acyl-CoA + malonyl-CoA + H(+) = a 3-oxoacyl-CoA + CO2 + CoA. Its pathway is lipid metabolism; fatty acid biosynthesis. Involved in the synthesis of fatty acids. Elongates C10 fatty acids to C14. The chain is Fatty acid elongase 2 from Trypanosoma brucei brucei (strain 927/4 GUTat10.1).